A 122-amino-acid chain; its full sequence is Large ribosomal subunit protein uL14 (122 aa).

It belongs to the universal ribosomal protein uL14 family. As to quaternary structure, part of the 50S ribosomal subunit. Forms a cluster with proteins L3 and L19. In the 70S ribosome, L14 and L19 interact and together make contacts with the 16S rRNA in bridges B5 and B8.

In terms of biological role, binds to 23S rRNA. Forms part of two intersubunit bridges in the 70S ribosome. The chain is Large ribosomal subunit protein uL14 from Pseudomonas paraeruginosa (strain DSM 24068 / PA7) (Pseudomonas aeruginosa (strain PA7)).